A 120-amino-acid chain; its full sequence is cAMP-responsive element-binding protein-like 2 (120 aa).

The tract at residues 1 to 24 (MDDSKVVGGKVKKPGKRGRKPAKI) is disordered. Positions 10-21 (KVKKPGKRGRKP) are enriched in basic residues. Residues 23–86 (KIDLKAKLER…MAMDQGKIPS (64 aa)) form the bZIP domain. A basic motif region spans residues 29–60 (KLERSRQSARECRARKKLRYQYLEELVSSRER). Positions 62 to 69 (ICALREEL) are leucine-zipper. Residues 93–120 (TGEEQSKSQQNSSRHMKAGKTDANSNSW) form a disordered region.

Belongs to the bZIP family. ATF subfamily. Interacts with CREB1; regulates CREB1 phosphorylation, stability and transcriptional activity. Interacts with immediate-early (IE) protein BICP22 of bovine herpesvirus-1 (BHV-1). Post-translationally, phosphorylated by AMPK.

It localises to the nucleus. Probable regulator of CREB1 transcriptional activity which is involved in adipose cells differentiation. May also play a regulatory role in the cell cycle. The sequence is that of cAMP-responsive element-binding protein-like 2 (CREBL2) from Bos taurus (Bovine).